A 199-amino-acid chain; its full sequence is Thymidine kinase (199 aa).

ATP contacts are provided by residues 15–22 and 88–91; these read GSMFSGKS and DEVQ. Catalysis depends on Glu89, which acts as the Proton acceptor. Residues Cys145, Cys148, Cys183, and His186 each coordinate Zn(2+).

It belongs to the thymidine kinase family. In terms of assembly, homotetramer.

It is found in the cytoplasm. The enzyme catalyses thymidine + ATP = dTMP + ADP + H(+). In Staphylococcus aureus (strain Mu50 / ATCC 700699), this protein is Thymidine kinase.